The sequence spans 684 residues: Acetophenone carboxylase delta subunit (684 aa).

Belongs to the oxoprolinase family. In terms of assembly, acetophenone carboxylase consists of five subunits; a heterooctameric subcomplex of two alpha (Apc1), two beta (Apc2), two gamma (Apc3) and two delta (Apc4) subunits assembles with the epsilon (Apc5) subunit in an unknown stoichiometry. Mg(2+) serves as cofactor. It depends on Mn(2+) as a cofactor.

The protein localises to the cytoplasm. The enzyme catalyses acetophenone + hydrogencarbonate + 2 ATP + H2O = 3-oxo-3-phenylpropanoate + 2 ADP + 2 phosphate + 2 H(+). Inhibited by zinc ions, carbamoylphosphate and beta,gamma-imido-ATP. Functionally, catalyzes the carboxylation of acetophenone to form 3-oxo-3-phenylpropanoate (benzoylacetate) in the anaerobic catabolism of ethylbenzene. Also carboxylates propiophenone at the same rate and 4-acetyl-pyridine at lower rates. This chain is Acetophenone carboxylase delta subunit (apc4), found in Aromatoleum aromaticum (strain DSM 19018 / LMG 30748 / EbN1) (Azoarcus sp. (strain EbN1)).